The primary structure comprises 73 residues: Dermaseptin-1 (73 aa).

Residues 1 to 22 form the signal peptide; it reads MAFLKKSIFLALFLGMVSLSIC. Positions 23–43 are cleaved as a propeptide — removed in mature form; sequence EEEKRENEGEEEQEDDEQSEM. Positions 25–46 are disordered; that stretch reads EKRENEGEEEQEDDEQSEMKRG. Acidic residues predominate over residues 30 to 40; the sequence is EGEEEQEDDEQ. Position 70 is a leucine amide (leucine 70). Residues 72 to 73 constitute a propeptide, removed in mature form; it reads EQ.

In terms of tissue distribution, expressed by the skin glands.

The protein localises to the secreted. In terms of biological role, has antiparasitic activity against trypomastigote form of T.cruzi (IC(50)=0.68 uM) in vitro but not against L.infantum. Probably acts by permeabilizing cell membranes. In vitro, shows no cytotoxicity against macrophages. Has antibacterial activity. In Pithecopus nordestinus (Northeastern Brazilian leaf frog), this protein is Dermaseptin-1.